Here is a 268-residue protein sequence, read N- to C-terminus: Proenkephalin-A (268 aa).

The first 24 residues, 1-24 (MARLLRLCTWLVALGPGLLATVQA), serve as a signal peptide directing secretion. Intrachain disulfides connect C26/C48, C30/C52, and C33/C65. The segment at 163-184 (TGDDRDRENHHQEGGDSDEGVS) is disordered. Positions 164–176 (GDDRDRENHHQEG) are enriched in basic and acidic residues. 2 consecutive propeptides follow at residues 197–208 (SPQVEDEAKELQ) and 218–228 (VGRPEWWMDYQ). Residue S252 is modified to Phosphoserine.

This sequence belongs to the opioid neuropeptide precursor family. In terms of processing, proenkephalin-A is cleaved by CTSL to generate Met-enkephalin. Post-translationally, processed and degraded by ACE. Probably cleaved by ACE. In terms of processing, processed by ACE to generate Met-enkephalin in the nucleus accumbens of the brain. Post-translationally, the N-terminal domain contains 6 conserved cysteines thought to be involved in disulfide bonding and/or processing.

Its subcellular location is the cytoplasmic vesicle. It localises to the secretory vesicle. The protein localises to the chromaffin granule lumen. The protein resides in the secreted. Its function is as follows. Neuropeptide that competes with and mimic the effects of opiate drugs. They play a role in a number of physiologic functions, including pain perception and responses to stress. Met-enkephalin-Arg-Phe neuropeptide acts as a strong ligand of Mu-type opioid receptor OPRM1. Met-enkephalin-Arg-Phe-binding to OPRM1 in the nucleus accumbens of the brain increases activation of OPRM1, leading to long-term synaptic depression of glutamate release. Functionally, increases glutamate release in the striatum and decreases GABA concentration in the striatum. In terms of biological role, increases glutamate release in the striatum. This Cavia porcellus (Guinea pig) protein is Proenkephalin-A (PENK).